The chain runs to 264 residues: Fibroblast growth factor 5 (264 aa).

An N-terminal signal peptide occupies residues 1–20 (MSLSLLFLIFCSHLIHSAWA). Residues 25–81 (RLTPEGQPAPPRNPGDSSGSRGRSSATFSSSSASSPVAASPGSQGSGSEHSSFQWSP) form a disordered region. Residues 38-72 (PGDSSGSRGRSSATFSSSSASSPVAASPGSQGSGS) show a composition bias toward low complexity. The N-linked (GlcNAc...) asparagine glycan is linked to Asn108. Residues 227-254 (FTVTVPEKKKPPVKPKVPLSQPRRSPSP) are disordered.

This sequence belongs to the heparin-binding growth factors family. As to quaternary structure, interacts with FGFR1 and FGFR2. Affinity between fibroblast growth factors (FGFs) and their receptors is increased by heparan sulfate glycosaminoglycans that function as coreceptors.

Its subcellular location is the secreted. In terms of biological role, plays an important role in the regulation of cell proliferation and cell differentiation. Required for normal regulation of the hair growth cycle. Functions as an inhibitor of hair elongation by promoting progression from anagen, the growth phase of the hair follicle, into catagen the apoptosis-induced regression phase. This Mus musculus (Mouse) protein is Fibroblast growth factor 5 (Fgf5).